A 3511-amino-acid chain; its full sequence is Unconventional myosin-XV (3511 aa).

4 disordered regions span residues 1–44 (MADE…TPKI), 574–690 (KKPI…SLRQ), 712–1030 (FAEP…PNKN), and 1105–1135 (VSSFRPKGPAPVQPPEHPDQDPEQGPAPQAC). Over residues 622–634 (SQPQARNNNNSHG) the composition is skewed to polar residues. Residues 654–672 (PPMPAPSPSPASPLTPPFS) are compositionally biased toward pro residues. The segment covering 769-792 (PSLRSLPGQGYHSPLGPLSPQLSL) has biased composition (low complexity). Positions 797 to 807 (FQPPFPPPPRR) are enriched in pro residues. Residues 1206–1883 (DGVEDMTQLE…LHQLLESMRE (678 aa)) enclose the Myosin motor domain. 1299–1306 (GESGSGKT) lines the ATP pocket. A coiled-coil region spans residues 1307-1334 (EATKLILRCLAAMNQRRDVMQQIKILEA). The tract at residues 1776-1783 (FVRCLKPN) is actin-binding. The tract at residues 1872–2013 (EHLHQLLESM…SSGPRVAVVR (142 aa)) is neck or regulatory domain. 2 consecutive IQ domains span residues 1886-1908 (QNRAALTLQRYLRGFFIQRHFRS) and 1909-1938 (LRRKIILLQSRARGFLARQRYQQMRQSLLK). Residues 2014–3511 (APRLQAEPCV…TLPPSEITLL (1498 aa)) are tail. The MyTH4 1 domain maps to 2049–2195 (MLTVPLKMPL…PTQLEWTAIQ (147 aa)). Disordered stretches follow at residues 2330-2359 (SHKEDGTNGETEAQRWTSNRQAVDSIGEST), 2392-2425 (YRMKGGGQPGGGGGSTSEDTSRRPPEPKLKPIPG), 2460-2509 (PLSA…SVAK), 2565-2584 (KQPPWAGHPEARRTDGGKVF), and 2629-2648 (RPCMGPTPVQPSRSLEPPED). The span at 2337–2351 (NGETEAQRWTSNRQA) shows a compositional bias: polar residues. Residues 2395–2406 (KGGGQPGGGGGS) show a composition bias toward gly residues. A compositionally biased stretch (basic and acidic residues) spans 2410-2420 (DTSRRPPEPKL). The span at 2573–2584 (PEARRTDGGKVF) shows a compositional bias: basic and acidic residues. An SH3 domain is found at 2848 to 2934 (KDSDYVVAVR…PSELVQPAAA (87 aa)). The disordered stretch occupies residues 2964 to 2984 (EVGRRREGPPVRARSADSGED). The segment covering 2965–2980 (VGRRREGPPVRARSAD) has biased composition (basic and acidic residues). The MyTH4 2 domain maps to 3031–3185 (FTKVPIQESL…PSNMELRAML (155 aa)). The FERM domain occupies 3190–3511 (SKRQLFLLPG…TLPPSEITLL (322 aa)).

The protein belongs to the TRAFAC class myosin-kinesin ATPase superfamily. Myosin family. In terms of assembly, interacts with the third PDZ domain of WHRN which is necessary for localization of WHRN to stereocilium tips. Interacts with FASLG. Interacts with EPS8. As to expression, in the developing inner ear, expressed in cochlea and vestibular apparatus. Expression appears to be restricted to cochlear neurosensory cells and upper epithelial layer of macula saccula. Also expressed in macula utriculi and cristae ampullaris of the semicircular canals. In adult cochlear hair cells, highest expression in stereocilia and apical body.

It is found in the cell projection. The protein resides in the stereocilium. The protein localises to the cytoplasm. It localises to the cytoskeleton. In terms of biological role, myosins are actin-based motor molecules with ATPase activity. Unconventional myosins serve in intracellular movements. Their highly divergent tails are presumed to bind to membranous compartments, which would be moved relative to actin filaments. Required for the arrangement of stereocilia in mature hair bundles. The chain is Unconventional myosin-XV (Myo15a) from Mus musculus (Mouse).